We begin with the raw amino-acid sequence, 157 residues long: uncharacterized protein (157 aa).

4 helical membrane-spanning segments follow: residues 3–23 (IFSF…MFIS), 24–44 (AFLS…ALAV), 47–67 (LMLG…ATAG), and 105–125 (IALL…IAGW).

It to E.coli YqaA.

It localises to the cell membrane. This is an uncharacterized protein from Haemophilus influenzae (strain ATCC 51907 / DSM 11121 / KW20 / Rd).